Consider the following 138-residue polypeptide: Translation initiation factor 2 subunit beta (138 aa).

It belongs to the eIF-2-beta/eIF-5 family. Heterotrimer composed of an alpha, a beta and a gamma chain.

Its function is as follows. eIF-2 functions in the early steps of protein synthesis by forming a ternary complex with GTP and initiator tRNA. The protein is Translation initiation factor 2 subunit beta of Methanococcus maripaludis (strain C6 / ATCC BAA-1332).